Reading from the N-terminus, the 189-residue chain is Cyclin-dependent kinase inhibitor 5 (189 aa).

The span at 73–93 (KQQKQQLIPSVNQCQTKNPRA) shows a compositional bias: polar residues. A disordered region spans residues 73–107 (KQQKQQLIPSVNQCQTKNPRASSGPAKKLEPDTTT).

The protein belongs to the CDI family. ICK/KRP subfamily. In terms of assembly, interacts with CYCD4-1. Does not interact with CDKA-1. Expressed in flowers and at lower levels in roots and leaves.

It is found in the nucleus. It localises to the nucleoplasm. In terms of biological role, inhibits CYCD2-1/CDKA-1 complex kinase activity without interaction with the complex. This Arabidopsis thaliana (Mouse-ear cress) protein is Cyclin-dependent kinase inhibitor 5 (KRP5).